A 734-amino-acid polypeptide reads, in one-letter code: Amino-acid acetyltransferase, mitochondrial (734 aa).

Positions 384 to 433 are disordered; the sequence is YSETSSRSTRAEADSNFNLRDDIPLSSFTEQKSGELEYSPRHQNDSPTQQ. 2 stretches are compositionally biased toward basic and acidic residues: residues 392 to 406 and 415 to 427; these read TRAE…RDDI and KSGE…RHQN. Residues 555–724 enclose the N-acetyltransferase domain; the sequence is GVPQISLTDP…YEAVCKTIEP (170 aa).

Belongs to the acetyltransferase family.

Its subcellular location is the mitochondrion. The enzyme catalyses L-glutamate + acetyl-CoA = N-acetyl-L-glutamate + CoA + H(+). It functions in the pathway amino-acid biosynthesis; L-arginine biosynthesis; N(2)-acetyl-L-ornithine from L-glutamate: step 1/4. Its function is as follows. N-acetylglutamate synthase involved in arginine biosynthesis. The chain is Amino-acid acetyltransferase, mitochondrial (arg2) from Botryotinia fuckeliana (strain B05.10) (Noble rot fungus).